The chain runs to 115 residues: uncharacterized protein (115 aa).

The first 26 residues, 1–26, serve as a signal peptide directing secretion; the sequence is MNFKKTVVSALSISALALSVSGVASA. One can recognise a BIG2 domain in the interval 36-114; it reads VKNISISPTH…AVFGKVYVTV (79 aa).

This is an uncharacterized protein from Bacillus subtilis (strain 168).